The chain runs to 465 residues: Cysteine--tRNA ligase (465 aa).

Zn(2+) is bound at residue cysteine 27. The 'HIGH' region signature appears at 29–39 (PTVYDDAHLGH). Cysteine 207, histidine 237, and glutamate 241 together coordinate Zn(2+). A 'KMSKS' region motif is present at residues 269-273 (KMSKS). Residue lysine 272 coordinates ATP.

This sequence belongs to the class-I aminoacyl-tRNA synthetase family. As to quaternary structure, monomer. The cofactor is Zn(2+).

Its subcellular location is the cytoplasm. The catalysed reaction is tRNA(Cys) + L-cysteine + ATP = L-cysteinyl-tRNA(Cys) + AMP + diphosphate. The protein is Cysteine--tRNA ligase of Helicobacter pylori (strain Shi470).